The chain runs to 411 residues: MEEKVGIECYITSTPGMGGEIKAEPEDFYVEEIAEFNLSDEGDFLIIRVEKKNWDTLNFARVLSNALGISQKRISFAGTKDKRALTVQYFSIYGVKKEEIERVNLKDAKIEVIGYARRAIQLGDLLGNFFRIRVYGCRDGEIFQETRNELMEKGTPNFFGLQRFGSIRFITHEVGKLILQNNYEEAFWVYVAKPFEGENEEVRKIREILWETRDAKLGLRELPKYLRYERNLLQKLREGKSEEEALLSLPKNLKMMFVHAYQSYIFNRLLSERIRQFGSLKTLEEGDFACYLTFKTRPTFSDCSEVEVNEARVRFLVKERVASLALPLVGYDTKLKGWSRIALDFLSEDNLDLSSFKTKHKEFSSSGSYRPADTLIEHTGLSFTDSTFSFYLPRGCYATVFLREFLKTELS.

Aspartate 81 functions as the Nucleophile in the catalytic mechanism. The 222-residue stretch at 154–375 (GTPNFFGLQR…SGSYRPADTL (222 aa)) folds into the TRUD domain.

It belongs to the pseudouridine synthase TruD family.

The enzyme catalyses uridine(13) in tRNA = pseudouridine(13) in tRNA. Could be responsible for synthesis of pseudouridine from uracil-13 in transfer RNAs. The sequence is that of Probable tRNA pseudouridine synthase D from Archaeoglobus fulgidus (strain ATCC 49558 / DSM 4304 / JCM 9628 / NBRC 100126 / VC-16).